The chain runs to 254 residues: DNA repair protein RecO (254 aa).

Belongs to the RecO family.

Involved in DNA repair and RecF pathway recombination. The protein is DNA repair protein RecO of Agrobacterium fabrum (strain C58 / ATCC 33970) (Agrobacterium tumefaciens (strain C58)).